The following is a 99-amino-acid chain: Aspartyl/glutamyl-tRNA(Asn/Gln) amidotransferase subunit C (99 aa).

This sequence belongs to the GatC family. Heterotrimer of A, B and C subunits.

It catalyses the reaction L-glutamyl-tRNA(Gln) + L-glutamine + ATP + H2O = L-glutaminyl-tRNA(Gln) + L-glutamate + ADP + phosphate + H(+). The catalysed reaction is L-aspartyl-tRNA(Asn) + L-glutamine + ATP + H2O = L-asparaginyl-tRNA(Asn) + L-glutamate + ADP + phosphate + 2 H(+). Allows the formation of correctly charged Asn-tRNA(Asn) or Gln-tRNA(Gln) through the transamidation of misacylated Asp-tRNA(Asn) or Glu-tRNA(Gln) in organisms which lack either or both of asparaginyl-tRNA or glutaminyl-tRNA synthetases. The reaction takes place in the presence of glutamine and ATP through an activated phospho-Asp-tRNA(Asn) or phospho-Glu-tRNA(Gln). This Paraburkholderia phymatum (strain DSM 17167 / CIP 108236 / LMG 21445 / STM815) (Burkholderia phymatum) protein is Aspartyl/glutamyl-tRNA(Asn/Gln) amidotransferase subunit C.